A 359-amino-acid chain; its full sequence is UPF0284 protein MAE_56900 (359 aa).

This sequence belongs to the UPF0284 family.

The chain is UPF0284 protein MAE_56900 from Microcystis aeruginosa (strain NIES-843 / IAM M-2473).